Reading from the N-terminus, the 262-residue chain is Type II restriction enzyme HinfI (262 aa).

It carries out the reaction Endonucleolytic cleavage of DNA to give specific double-stranded fragments with terminal 5'-phosphates.. In terms of biological role, a P subtype restriction enzyme that recognizes the double-stranded sequence 5'-GANTC-3' and cleaves after G-1. The polypeptide is Type II restriction enzyme HinfI (hinfIR) (Haemophilus influenzae).